Here is a 101-residue protein sequence, read N- to C-terminus: MIKSELVQRIAEHNPHLYQRDVENIVNAILDEIVAALARGDRVELRGFGAFSVKHRPARAGRNPRTGEHVPVDQKSVPFFKTGKEMRERLNRDNATSEANA.

Positions 57–76 (PARAGRNPRTGEHVPVDQKS) are disordered.

Belongs to the bacterial histone-like protein family. As to quaternary structure, heterodimer of an alpha and a beta chain.

Its function is as follows. This protein is one of the two subunits of integration host factor, a specific DNA-binding protein that functions in genetic recombination as well as in transcriptional and translational control. The protein is Integration host factor subunit beta of Nitrobacter winogradskyi (strain ATCC 25391 / DSM 10237 / CIP 104748 / NCIMB 11846 / Nb-255).